Reading from the N-terminus, the 322-residue chain is HPr kinase/phosphorylase (322 aa).

Residues His146 and Lys167 contribute to the active site. 161–168 (GDSGLGKS) contacts ATP. Ser168 is a Mg(2+) binding site. The active-site Proton acceptor; for phosphorylation activity. Proton donor; for dephosphorylation activity is the Asp185. Residues 209–218 (LEVRGLGLLD) are important for the catalytic mechanism of both phosphorylation and dephosphorylation. Residue Glu210 participates in Mg(2+) binding. The active site involves Arg250. Residues 271–276 (QVAAGR) form an important for the catalytic mechanism of dephosphorylation region.

It belongs to the HPrK/P family. As to quaternary structure, homohexamer. Requires Mg(2+) as cofactor.

The catalysed reaction is [HPr protein]-L-serine + ATP = [HPr protein]-O-phospho-L-serine + ADP + H(+). It catalyses the reaction [HPr protein]-O-phospho-L-serine + phosphate + H(+) = [HPr protein]-L-serine + diphosphate. Functionally, catalyzes the ATP- as well as the pyrophosphate-dependent phosphorylation of a specific serine residue in HPr, a phosphocarrier protein of the phosphoenolpyruvate-dependent sugar phosphotransferase system (PTS). HprK/P also catalyzes the pyrophosphate-producing, inorganic phosphate-dependent dephosphorylation (phosphorolysis) of seryl-phosphorylated HPr (P-Ser-HPr). The sequence is that of HPr kinase/phosphorylase from Burkholderia ambifaria (strain ATCC BAA-244 / DSM 16087 / CCUG 44356 / LMG 19182 / AMMD) (Burkholderia cepacia (strain AMMD)).